Here is a 381-residue protein sequence, read N- to C-terminus: Chymosin (381 aa).

A signal peptide spans 1–16 (MRGFVVLLAVFALSQA). Residues 17–58 (SGIVRIPLHKGKSLRRALKERGLLEDFLKNHQHAVSRKHSNS) constitute a propeptide, activation peptide. The Peptidase A1 domain occupies 74-378 (YFGKIYIGTP…DRASNLVGLA (305 aa)). The active site involves D92. The stretch at 92–102 (DTGSSDLWVPS) is repeat 1. Disulfide bonds link C105–C110 and C265–C269. The active site involves D274. Repeat unit 2 spans residues 274–284 (DTGTSMLVGPG). An intrachain disulfide couples C308 to C341.

It belongs to the peptidase A1 family. In terms of assembly, monomer.

It carries out the reaction Broad specificity similar to that of pepsin A. Clots milk by cleavage of a single 104-Ser-Phe-|-Met-Ala-107 bond in kappa-chain of casein.. Inhibited by pepstatin. In terms of biological role, hydrolyzes a variety of proteins. The chain is Chymosin (CYM) from Callithrix jacchus (White-tufted-ear marmoset).